Here is a 707-residue protein sequence, read N- to C-terminus: Polyribonucleotide nucleotidyltransferase (707 aa).

Mg(2+) contacts are provided by Asp487 and Asp493. A KH domain is found at 554–613 (PSMATIKIDPDKIRDVIGKGGATIRKICDDTGASIDLDDDGTVRIYAEDKTAAKAAIDTV). Residues 623–691 (GKLYRGTVAR…NRNRVKLSIK (69 aa)) form the S1 motif domain.

Belongs to the polyribonucleotide nucleotidyltransferase family. Component of the RNA degradosome, which is a multiprotein complex involved in RNA processing and mRNA degradation. Mg(2+) is required as a cofactor.

The protein localises to the cytoplasm. It carries out the reaction RNA(n+1) + phosphate = RNA(n) + a ribonucleoside 5'-diphosphate. Its function is as follows. Involved in mRNA degradation. Catalyzes the phosphorolysis of single-stranded polyribonucleotides processively in the 3'- to 5'-direction. The protein is Polyribonucleotide nucleotidyltransferase of Chromohalobacter salexigens (strain ATCC BAA-138 / DSM 3043 / CIP 106854 / NCIMB 13768 / 1H11).